The sequence spans 187 residues: Holliday junction resolvase (187 aa).

The protein belongs to the RuvC family. Poxviruses-type subfamily. Mg(2+) is required as a cofactor. In terms of processing, acylated by palmitic acid group(s).

It is found in the membrane. In terms of biological role, nuclease that specifically cleaves and resolves four-way DNA Holliday junctions into linear duplex products. This chain is Holliday junction resolvase, found in Vaccinia virus (strain Ankara) (VACV).